The chain runs to 65 residues: Large ribosomal subunit protein uL29 (65 aa).

The protein belongs to the universal ribosomal protein uL29 family.

This Psychrobacter arcticus (strain DSM 17307 / VKM B-2377 / 273-4) protein is Large ribosomal subunit protein uL29.